The following is a 282-amino-acid chain: MSRWPSPAKLNLFLYITGQRADGYHTLQTLFQFLDYGDTLTIEPRTDGQLRLLTPVAGVPDEENLIVRAARLLMRAASESDRLPAGSGADISVDKRLPMGGGLGGGSSNAATVLVALNHLWGCGLSEEELATLGLQLGADVPVFVRGHAAFAEGVGEILTPVEPEEKWYLVAHPGVSIPTPVIFRDPELPRNTPRRSINTLLNCEFSNDCELIARKRFREVDAALSWLLEYAPSRLTGTGACVFAEFNTESAARQVLDTAPAWLNGFVARGVNLSPLKQALL.

K9 is a catalytic residue. Residue P98 to S108 participates in ATP binding. The active site involves D140.

It belongs to the GHMP kinase family. IspE subfamily. As to quaternary structure, homodimer.

It catalyses the reaction 4-CDP-2-C-methyl-D-erythritol + ATP = 4-CDP-2-C-methyl-D-erythritol 2-phosphate + ADP + H(+). It functions in the pathway isoprenoid biosynthesis; isopentenyl diphosphate biosynthesis via DXP pathway; isopentenyl diphosphate from 1-deoxy-D-xylulose 5-phosphate: step 3/6. Its function is as follows. Catalyzes the phosphorylation of the position 2 hydroxy group of 4-diphosphocytidyl-2C-methyl-D-erythritol. This Klebsiella pneumoniae (strain 342) protein is 4-diphosphocytidyl-2-C-methyl-D-erythritol kinase.